The following is a 406-amino-acid chain: Tryptophan synthase beta chain (406 aa).

At Lys99 the chain carries N6-(pyridoxal phosphate)lysine.

Belongs to the TrpB family. As to quaternary structure, tetramer of two alpha and two beta chains. Pyridoxal 5'-phosphate serves as cofactor.

The enzyme catalyses (1S,2R)-1-C-(indol-3-yl)glycerol 3-phosphate + L-serine = D-glyceraldehyde 3-phosphate + L-tryptophan + H2O. It participates in amino-acid biosynthesis; L-tryptophan biosynthesis; L-tryptophan from chorismate: step 5/5. Its function is as follows. The beta subunit is responsible for the synthesis of L-tryptophan from indole and L-serine. The protein is Tryptophan synthase beta chain of Chelativorans sp. (strain BNC1).